Consider the following 699-residue polypeptide: Extracellular matrix protein 2 (699 aa).

Residues 1-20 form the signal peptide; it reads MKIAVLFCFFLLIIFQTDFG. Positions 101–158 constitute a VWFC domain; that stretch reads GHCLVKGITMYNKAVWSPEPCTTCLCSDGRVLCDETMCHPQRCPQTVIPEGECCPVCS. The span at 176 to 186 shows a compositional bias: basic and acidic residues; the sequence is EFSGDSSEQRE. The segment at 176-316 is disordered; the sequence is EFSGDSSEQR…PAPPRGTLRL (141 aa). Over residues 212–224 the composition is skewed to acidic residues; the sequence is QSEEDEEVKEEDT. Positions 243 to 260 are enriched in basic and acidic residues; that stretch reads GDSRGGDRKQRPGEERRL. The segment covering 270-291 has biased composition (acidic residues); it reads EEEEDEEEEGEEGEEDEEDEED. The Cell attachment site motif lies at 294 to 296; sequence RGD. Residues 307–344 enclose the LRRNT domain; that stretch reads PAPPRGTLRLPSGCSLSYRTISCINAMLTQIPPLTAPQ. LRR repeat units lie at residues 368-388, 394-415, 416-436, 439-459, 465-484, 486-507, 510-530, 536-557, 558-578, 582-602, 609-630, 632-653, and 661-684; these read NLERLDLSKNNITSSGIGPKA, KLMRLNMDGNNLIQIPSQLPST, LEELKVNENNLQAIDEESLSD, QLVTLELEGNNLSEANVNPLA, SLAYLRLGKNKFRIIPQGLP, SIEELYLENNQIEEITEICFNH, KINVIVLRYNKIEENRIAPLA, NLESIDLSYNKLYHVPSYLPKS, LLHLVLLGNQIERIPGYVFGH, GLEYLYLSFNKLADDGMDRVS, SLRELFLDHNDLKSIPPGIQEM, ALHFLRLNNNKIRNILPEEICN, and NLEHLHLENNYIKIREIPSYTFSC. Asn378 carries an N-linked (GlcNAc...) asparagine glycan. Asn449 is a glycosylation site (N-linked (GlcNAc...) asparagine). Asn506 carries an N-linked (GlcNAc...) asparagine glycan.

Belongs to the small leucine-rich proteoglycan (SLRP) family. SLRP class I subfamily. As to quaternary structure, interacts with numerous extracellular matrix proteins. Interacts with MSL1 and RASSF1. As to expression, expressed predominantly in adipose tissue as well as female-specific organs such as mammary gland, ovary, and uterus.

It localises to the secreted. The protein localises to the extracellular space. Its subcellular location is the extracellular matrix. Functionally, promotes matrix assembly and cell adhesiveness. In Homo sapiens (Human), this protein is Extracellular matrix protein 2 (ECM2).